The sequence spans 340 residues: Ketol-acid reductoisomerase (NADP(+)) (340 aa).

One can recognise a KARI N-terminal Rossmann domain in the interval 2 to 181; sequence VKMYYEADVK…GCTKAGVIET (180 aa). NADP(+) contacts are provided by residues 25-28, arginine 48, serine 52, and 82-85; these read YGSQ and DERQ. Histidine 107 is a catalytic residue. Glycine 133 contributes to the NADP(+) binding site. In terms of domain architecture, KARI C-terminal knotted spans 182–327; that stretch reads SFREETETDL…EQLRGMMSWI (146 aa). The Mg(2+) site is built by aspartate 190, glutamate 194, glutamate 226, and glutamate 230. Position 251 (serine 251) interacts with substrate.

It belongs to the ketol-acid reductoisomerase family. Mg(2+) serves as cofactor.

The enzyme catalyses (2R)-2,3-dihydroxy-3-methylbutanoate + NADP(+) = (2S)-2-acetolactate + NADPH + H(+). It catalyses the reaction (2R,3R)-2,3-dihydroxy-3-methylpentanoate + NADP(+) = (S)-2-ethyl-2-hydroxy-3-oxobutanoate + NADPH + H(+). It functions in the pathway amino-acid biosynthesis; L-isoleucine biosynthesis; L-isoleucine from 2-oxobutanoate: step 2/4. The protein operates within amino-acid biosynthesis; L-valine biosynthesis; L-valine from pyruvate: step 2/4. Involved in the biosynthesis of branched-chain amino acids (BCAA). Catalyzes an alkyl-migration followed by a ketol-acid reduction of (S)-2-acetolactate (S2AL) to yield (R)-2,3-dihydroxy-isovalerate. In the isomerase reaction, S2AL is rearranged via a Mg-dependent methyl migration to produce 3-hydroxy-3-methyl-2-ketobutyrate (HMKB). In the reductase reaction, this 2-ketoacid undergoes a metal-dependent reduction by NADPH to yield (R)-2,3-dihydroxy-isovalerate. This is Ketol-acid reductoisomerase (NADP(+)) from Brevibacillus brevis (strain 47 / JCM 6285 / NBRC 100599).